Here is a 229-residue protein sequence, read N- to C-terminus: Uracil-DNA glycosylase (229 aa).

The Proton acceptor role is filled by aspartate 70.

The protein belongs to the uracil-DNA glycosylase (UDG) superfamily. UNG family.

The protein resides in the cytoplasm. The enzyme catalyses Hydrolyzes single-stranded DNA or mismatched double-stranded DNA and polynucleotides, releasing free uracil.. Functionally, excises uracil residues from the DNA which can arise as a result of misincorporation of dUMP residues by DNA polymerase or due to deamination of cytosine. This is Uracil-DNA glycosylase from Chlamydia abortus (strain DSM 27085 / S26/3) (Chlamydophila abortus).